Reading from the N-terminus, the 1341-residue chain is DNA-directed RNA polymerase subunit beta (1341 aa).

Belongs to the RNA polymerase beta chain family. In terms of assembly, the RNAP catalytic core consists of 2 alpha, 1 beta, 1 beta' and 1 omega subunit. When a sigma factor is associated with the core the holoenzyme is formed, which can initiate transcription.

It catalyses the reaction RNA(n) + a ribonucleoside 5'-triphosphate = RNA(n+1) + diphosphate. Functionally, DNA-dependent RNA polymerase catalyzes the transcription of DNA into RNA using the four ribonucleoside triphosphates as substrates. The protein is DNA-directed RNA polymerase subunit beta of Vibrio cholerae serotype O1 (strain ATCC 39315 / El Tor Inaba N16961).